The primary structure comprises 312 residues: Ornithine carbamoyltransferase (312 aa).

Residues 59-62 (STRT), Q86, R110, and 137-140 (HPCQ) each bind carbamoyl phosphate. L-ornithine-binding positions include N167, D231, and 235-236 (SM). The carbamoyl phosphate site is built by C271 and R299.

The protein belongs to the aspartate/ornithine carbamoyltransferase superfamily. OTCase family.

It localises to the cytoplasm. The enzyme catalyses carbamoyl phosphate + L-ornithine = L-citrulline + phosphate + H(+). It functions in the pathway amino-acid biosynthesis; L-arginine biosynthesis; L-arginine from L-ornithine and carbamoyl phosphate: step 1/3. Its function is as follows. Reversibly catalyzes the transfer of the carbamoyl group from carbamoyl phosphate (CP) to the N(epsilon) atom of ornithine (ORN) to produce L-citrulline. The sequence is that of Ornithine carbamoyltransferase from Methanopyrus kandleri (strain AV19 / DSM 6324 / JCM 9639 / NBRC 100938).